The chain runs to 371 residues: Cytochrome b (371 aa).

The next 4 helical transmembrane spans lie at 25–45 (FGSMLLTCLALQVLTGFFLAI), 69–90 (WMMQNLHAIGASMFFICIYIHI), 105–125 (WMSGITLLITLMATAFFGYVL), and 170–190 (FFALHFILPFAIISLSSLHII). Heme b-binding residues include His75 and His89. Residues His174 and His188 each contribute to the heme b site. His193 provides a ligand contact to a ubiquinone. Helical transmembrane passes span 218–238 (HKDLLLLTFMILLLFTIVSFL), 280–300 (LGGALALVMSIMILFIIPFTH), 312–332 (LSQLMFWTLVSTFATITWAAT), and 339–358 (FIIISQTTSMLYFTFFLSTP).

The protein belongs to the cytochrome b family. In terms of assembly, the cytochrome bc1 complex contains 3 respiratory subunits (MT-CYB, CYC1 and UQCRFS1), 2 core proteins (UQCRC1 and UQCRC2) and probably 6 low-molecular weight proteins. Heme b serves as cofactor.

It is found in the mitochondrion inner membrane. Its function is as follows. Component of the ubiquinol-cytochrome c reductase complex (complex III or cytochrome b-c1 complex) that is part of the mitochondrial respiratory chain. The b-c1 complex mediates electron transfer from ubiquinol to cytochrome c. Contributes to the generation of a proton gradient across the mitochondrial membrane that is then used for ATP synthesis. In Antaresia maculosa (Eastern small blotched python), this protein is Cytochrome b (MT-CYB).